Here is a 113-residue protein sequence, read N- to C-terminus: Probable 4-amino-4-deoxy-L-arabinose-phosphoundecaprenol flippase subunit ArnE (113 aa).

3 helical membrane-spanning segments follow: residues 39–59 (IFWL…WLRL), 62–82 (ILPL…VTLI), and 91–111 (VNVK…LMSM). The EamA domain maps to 42-111 (LITAIAMLGF…IMLGIVLMSM (70 aa)).

Belongs to the ArnE family. Heterodimer of ArnE and ArnF.

Its subcellular location is the cell inner membrane. Its pathway is bacterial outer membrane biogenesis; lipopolysaccharide biosynthesis. Translocates 4-amino-4-deoxy-L-arabinose-phosphoundecaprenol (alpha-L-Ara4N-phosphoundecaprenol) from the cytoplasmic to the periplasmic side of the inner membrane. In Proteus mirabilis (strain HI4320), this protein is Probable 4-amino-4-deoxy-L-arabinose-phosphoundecaprenol flippase subunit ArnE.